A 237-amino-acid chain; its full sequence is uncharacterized protein (237 aa).

Residues 53–70 traverse the membrane as a helical segment; the sequence is LIFLATVLAGLILFYFGV. The disordered stretch occupies residues 85–155; sequence PPIVIKPVAP…TQEKKDVKVA (71 aa). Residues 98 to 157 adopt a coiled-coil conformation; that stretch reads KTQESNQTTKKEVKQEEQKKEEPKKMVQKQETQEKREVKKSEKNEVKQTQEKKDVKVAKK. Composition is skewed to basic and acidic residues over residues 106-122 and 128-155; these read TKKEVKQEEQKKEEPKK and ETQEKREVKKSEKNEVKQTQEKKDVKVA. Residues 165 to 237 form the SPOR domain; the sequence is AANLRTYKFQ…HFKDAIFVRK (73 aa).

The protein resides in the membrane. This is an uncharacterized protein from Aquifex aeolicus (strain VF5).